A 605-amino-acid chain; its full sequence is Elongation factor 4 (605 aa).

Residues 4–186 (SATRNFCIIA…AIVARVPAPK (183 aa)) form the tr-type G domain. GTP contacts are provided by residues 16-21 (DHGKST) and 133-136 (NKID).

The protein belongs to the TRAFAC class translation factor GTPase superfamily. Classic translation factor GTPase family. LepA subfamily.

It is found in the cell membrane. It carries out the reaction GTP + H2O = GDP + phosphate + H(+). Functionally, required for accurate and efficient protein synthesis under certain stress conditions. May act as a fidelity factor of the translation reaction, by catalyzing a one-codon backward translocation of tRNAs on improperly translocated ribosomes. Back-translocation proceeds from a post-translocation (POST) complex to a pre-translocation (PRE) complex, thus giving elongation factor G a second chance to translocate the tRNAs correctly. Binds to ribosomes in a GTP-dependent manner. The chain is Elongation factor 4 from Dehalococcoides mccartyi (strain ATCC BAA-2266 / KCTC 15142 / 195) (Dehalococcoides ethenogenes (strain 195)).